The primary structure comprises 499 residues: Terpentedienyl-diphosphate synthase (499 aa).

Mg(2+) is bound by residues aspartate 284 and aspartate 286. The short motif at 284–287 (DGDD) is the DXDD motif element.

It belongs to the terpene synthase family. Monomer. It depends on Mg(2+) as a cofactor.

The catalysed reaction is (2E,6E,10E)-geranylgeranyl diphosphate = terpentedienyl diphosphate. It functions in the pathway antibiotic biosynthesis. Involved in the production of the isoprenoid antibiotic terpentecin. Converts geranylgeranyl diphosphate (GGDP) into terpentedienol diphosphate (TDP) by a protonation-initiated cyclization. This is Terpentedienyl-diphosphate synthase (cyc1) from Kitasatospora griseola (Streptomyces griseolosporeus).